A 290-amino-acid polypeptide reads, in one-letter code: Acetylglutamate kinase (290 aa).

Residues 72 to 73 (GG), Arg94, and Asn187 contribute to the substrate site.

The protein belongs to the acetylglutamate kinase family. ArgB subfamily.

The protein localises to the plastid. Its subcellular location is the chloroplast. The catalysed reaction is N-acetyl-L-glutamate + ATP = N-acetyl-L-glutamyl 5-phosphate + ADP. Its pathway is amino-acid biosynthesis; L-arginine biosynthesis; N(2)-acetyl-L-ornithine from L-glutamate: step 2/4. In terms of biological role, catalyzes the ATP-dependent phosphorylation of N-acetyl-L-glutamate. This Cyanidioschyzon merolae (strain NIES-3377 / 10D) (Unicellular red alga) protein is Acetylglutamate kinase.